Here is a 646-residue protein sequence, read N- to C-terminus: Pentatricopeptide repeat-containing protein At5g48910 (646 aa).

The interval 1-24 (MNPTQTLFSPGGNSPASSPASHPS) is disordered. A compositionally biased stretch (low complexity) spans 9-24 (SPGGNSPASSPASHPS). 11 PPR repeats span residues 54–88 (DTLA…MPQR), 89–126 (NCFS…FVEP), 127–161 (NRFT…GFGG), 162–197 (DEFV…DMVV), 207–237 (EIVL…MRQR), 238–272 (SVVS…DIRP), 273–307 (NYVT…GIRI), 308–338 (DDVL…LPRE), 339–373 (NVIT…GVRP), 374–409 (SDVA…GLEP), and 410–440 (RIEH…MPIK). The type E motif stretch occupies residues 445–520 (IWKALLGACR…DPGCSLIDID (76 aa)). Positions 521–551 (GVLHEFVVEDDSHPKAKEINSMLVEISDKLR) are type E(+) motif. The interval 552–646 (LAGYRPITTQ…DGSCSCMDYW (95 aa)) is type DYW motif.

This sequence belongs to the PPR family. PCMP-H subfamily.

The protein is Pentatricopeptide repeat-containing protein At5g48910 (PCMP-H38) of Arabidopsis thaliana (Mouse-ear cress).